A 95-amino-acid chain; its full sequence is Large ribosomal subunit protein bL25 (95 aa).

The protein belongs to the bacterial ribosomal protein bL25 family. As to quaternary structure, part of the 50S ribosomal subunit; part of the 5S rRNA/L5/L18/L25 subcomplex. Contacts the 5S rRNA. Binds to the 5S rRNA independently of L5 and L18.

Functionally, this is one of the proteins that binds to the 5S RNA in the ribosome where it forms part of the central protuberance. This chain is Large ribosomal subunit protein bL25, found in Shewanella woodyi (strain ATCC 51908 / MS32).